Consider the following 1194-residue polypeptide: F-box only protein 38 (1194 aa).

The 46-residue stretch at 30–75 folds into the F-box domain; it reads MNQLSHEVLCHIFRYLPLQDIMCMECLSRKLKEAVTLYLRVVRVVD. Residues 59-119 form an interaction with KLF7 region; sequence KLKEAVTLYL…LHPRYLERRR (61 aa). Short sequence motifs (nuclear export signal) lie at residues 194-201, 307-316, and 451-460; these read LHLVGVNV, LEVDLGYLII, and LLPSLEFISL. Disordered regions lie at residues 487 to 529, 577 to 776, 793 to 879, and 896 to 915; these read ALVS…FRPD, EEQA…DAES, RTGR…RARS, and KPCH…STSD. Residues 493–510 show a composition bias toward low complexity; sequence NSNNDNDNNAPNNNANLH. T592 carries the post-translational modification Phosphothreonine. Phosphoserine occurs at positions 599, 601, and 607. A compositionally biased stretch (acidic residues) spans 599 to 609; sequence SESDDEEDSLE. Basic and acidic residues-rich tracts occupy residues 622-631 and 683-701; these read RYSEREEKTG and IKAD…KSKD. Low complexity predominate over residues 705–728; the sequence is SCSSSSSSTAASTAGNASSPSTAS. Phosphoserine occurs at positions 742 and 746. The span at 764 to 774 shows a compositional bias: acidic residues; that stretch reads EDSEAMEEGDA. The segment covering 793–804 has biased composition (basic and acidic residues); it reads RTGRCSDEERPS. Residues 855–867 are compositionally biased toward polar residues; sequence SSQPESCDVQSNE. The segment covering 896–906 has biased composition (basic residues); that stretch reads KPCHAMKRKRT. The Nuclear localization signal signature appears at 902–905; that stretch reads KRKR.

In terms of assembly, part of the SCF (SKP1-CUL1-F-box) E3 ubiquitin-protein ligase complex SCF(FBXO38) composed of CUL1, SKP1, RBX1 and FBXO38. Interacts with KLF7. Interacts with PDCD1/PD-1. Expressed at high levels in embryo (developing brain, spinal cord, branchial arms and limbs). Widely expressed at low levels in adult tissues, with highest expression in testis. Expressed in postmeiotic spermatids.

It is found in the cytoplasm. The protein localises to the cytosol. It localises to the nucleus. The protein operates within protein modification; protein ubiquitination. Its function is as follows. Substrate recognition component of a SCF (SKP1-CUL1-F-box protein) E3 ubiquitin-protein ligase complex which mediates the ubiquitination and subsequent proteasomal degradation of PDCD1/PD-1, thereby regulating T-cells-mediated immunity. Required for anti-tumor activity of T-cells by promoting the degradation of PDCD1/PD-1; the PDCD1-mediated inhibitory pathway being exploited by tumors to attenuate anti-tumor immunity and facilitate tumor survival. May indirectly stimulate the activity of transcription factor KLF7, a regulator of neuronal differentiation, without promoting KLF7 ubiquitination. The protein is F-box only protein 38 of Mus musculus (Mouse).